Consider the following 174-residue polypeptide: Guided entry of tail-anchored proteins factor 1 (174 aa).

Over 1–8 (MSSAAADH) the chain is Lumenal. Residues 9 to 29 (WAWLLVLSFVFGCNVLRVLLP) traverse the membrane as a helical segment. Topologically, residues 30 to 99 (SFSSFMSRVL…VKARTAQLAK (70 aa)) are cytoplasmic. The stretch at 39 to 94 (LQKDAEQESQMRAEIQDMKQELSTVNMMDEFARYARLERKINKMTDKLKTHVKART) forms a coiled coil. The interval 39–97 (LQKDAEQESQMRAEIQDMKQELSTVNMMDEFARYARLERKINKMTDKLKTHVKARTAQL) is interaction with GET3/TRC40. Residues 100 to 120 (IKWVISVAFYVLQAALMISLI) traverse the membrane as a helical segment. Over 121–148 (WKYYSVPVAVVPSKWITPLDRLVAFPTR) the chain is Lumenal. A helical membrane pass occupies residues 149 to 169 (VAGGVGITCWILVCNKVVAIV). At 170-174 (LHPFS) the chain is on the cytoplasmic side.

This sequence belongs to the WRB/GET1 family. In terms of assembly, component of the Golgi to ER traffic (GET) complex, which is composed of GET1/WRB, CAMLG/GET2 and GET3. Within the complex, GET1 and CAMLG form a heterotetramer which is stabilized by phosphatidylinositol binding and which binds to the GET3 homodimer. Interacts with CAMLG (via C-terminus). GET3 shows a higher affinity for CAMLG than for GET1.

The protein resides in the endoplasmic reticulum membrane. Its function is as follows. Required for the post-translational delivery of tail-anchored (TA) proteins to the endoplasmic reticulum. Together with CAMLG/GET2, acts as a membrane receptor for soluble GET3/TRC40, which recognizes and selectively binds the transmembrane domain of TA proteins in the cytosol. Required to ensure correct topology and ER insertion of CAMLG. This is Guided entry of tail-anchored proteins factor 1 from Pongo abelii (Sumatran orangutan).